Here is a 265-residue protein sequence, read N- to C-terminus: MLQGFLFLLSVVLLFSSSAAACDRCLHSSKAAYFSSASALSSGACAYGSMATGFFAGHIAAALPSIYKDGSGCGACFQVRCKNPTLCSSKGTTVIVTDLNKTNQTDLVLSSRAFRAMAKPVVGADRDLLKQGIVDIEYRRVPCDYGNKKMNVRVEESSKNPNYLAIKLLYQGGQTEVVAIYIAQVGSSHWSYMTRSHGAVWVTDKVPNGALQFRFVVTAGYDGKMVWSQRVLPANWEAGKSYDAGVQITDIAQEGCDPCDDHIWN.

An N-terminal signal peptide occupies residues 1–21 (MLQGFLFLLSVVLLFSSSAAA). One can recognise an Expansin-like EG45 domain in the interval 42–148 (SGACAYGSMA…RRVPCDYGNK (107 aa)). N-linked (GlcNAc...) asparagine glycosylation is found at asparagine 100 and asparagine 103. Residues 162-244 (NYLAIKLLYQ…NWEAGKSYDA (83 aa)) enclose the Expansin-like CBD domain.

The protein belongs to the expansin family. Expansin-like A subfamily.

Its subcellular location is the secreted. The sequence is that of Expansin-like A2 (EXLA2) from Arabidopsis thaliana (Mouse-ear cress).